We begin with the raw amino-acid sequence, 109 residues long: DNA-binding protein MJ0691 (109 aa).

Belongs to the PDCD5 family.

The protein is DNA-binding protein MJ0691 of Methanocaldococcus jannaschii (strain ATCC 43067 / DSM 2661 / JAL-1 / JCM 10045 / NBRC 100440) (Methanococcus jannaschii).